Consider the following 2050-residue polypeptide: Unconventional myosin-XVIIIa (2050 aa).

Basic and acidic residues-rich tracts occupy residues 1-17 (MFNL…GRKE) and 23-34 (EKKERMSAAELR). The disordered stretch occupies residues 1-34 (MFNLMKKDKDKDGGRKEKKEKKEKKERMSAAELR). Residues 1–398 (MFNLMKKDKD…LDVDEDDIEK (398 aa)) form a mediates nucleotide-independent binding to F-actin and interaction with GOLPH3 region. Phosphoserine occurs at positions 35, 52, 72, and 74. Thr79 carries the phosphothreonine modification. Phosphoserine occurs at positions 83 and 98. A Phosphothreonine modification is found at Thr99. 2 positions are modified to phosphoserine: Ser102 and Ser103. An Interaction with actin motif is present at residues 114-118 (RGSVL). 7 positions are modified to phosphoserine: Ser140, Ser145, Ser157, Ser160, Ser164, Ser234, and Ile340. Positions 140-167 (SFSQRSRDESASETSTPSEHSAAPSPQV) are disordered. Residues 220-311 (ELELQRRPTG…SVRLKVQPIP (92 aa)) enclose the PDZ domain. The Myosin N-terminal SH3-like domain occupies 349-401 (TEKVWLVHRDGFSLASQLKSEELSLPEGKARVKLDHDGAILDVDEDDIEKANA). One can recognise a Myosin motor domain in the interval 405 to 1181 (DRLEDLASLV…TLARLEEQRD (777 aa)). 498 to 505 (GSSGSGKT) is an ATP binding site. 4 positions are modified to phosphoserine: Ser983, Ser1063, Ser1064, and Ser1066. The segment at 1051-1071 (PGEPRSASSRRVSSSSELDLP) is disordered. Over residues 1055 to 1066 (RSASSRRVSSSS) the composition is skewed to low complexity. The 30-residue stretch at 1184–1213 (TSRHLTLFQAACRGYLARQHFKKRKIQDLA) folds into the IQ domain. A coiled-coil region spans residues 1242-1967 (LIQVQLSEEQ…KKNKLEGDSD (726 aa)). A disordered region spans residues 1448-1477 (RNHELEKKQRRFDSELSQAHEETQREKLQR). Ser1636 carries the post-translational modification Phosphoserine. The segment at 1848–1897 (MEKLTEERDQRAAAENREKEQNKRLQRQLRDTKEEMSELARKEAEASRKK) is disordered. Phosphoserine is present on residues Ser1938, Ser1966, Ser1970, Ser1994, Ser1998, Ser2002, Ser2003, Ser2016, Ser2032, Ser2037, and Ser2039. Residues 1955–2050 (YQKKKNKLEG…TEAKLTETSA (96 aa)) form a disordered region. Thr2041 is modified (phosphothreonine). Positions 2041 to 2050 (TEAKLTETSA) are enriched in basic and acidic residues.

Belongs to the TRAFAC class myosin-kinesin ATPase superfamily. Myosin family. In terms of assembly, homodimer. Forms a tripartite complex with CDC42BPA/CDC42BPB and LURAP1 with the latter acting as an adapter connecting CDC42BPA/CDC42BPB and MYO18A. Binds F-actin; regulated by ADP and GOLPH3. Interacts with GOLPH3; the interaction is direct and may link Golgi membranes to the actin cytoskeleton. Interacts with JAK3. Interacts with MSR1 and CD14. Post-translationally, phosphorylated on tyrosine upon CSF1R activation. Isoform 6 is phosphorylated on Ser-340. Isoform 1; Expressed ubiquitously. Isoform 2: Specifically expressed in most hematopoietic cells. Isoform 3: Predominantly expressed in alveolar macrophages.

It localises to the golgi apparatus. The protein localises to the trans-Golgi network. The protein resides in the golgi outpost. It is found in the cytoplasm. Its subcellular location is the cytoskeleton. It localises to the microtubule organizing center. The protein localises to the endoplasmic reticulum-Golgi intermediate compartment. May link Golgi membranes to the cytoskeleton and participate in the tensile force required for vesicle budding from the Golgi. Thereby, may play a role in Golgi membrane trafficking and could indirectly give its flattened shape to the Golgi apparatus. Alternatively, in concert with LURAP1 and CDC42BPA/CDC42BPB, has been involved in modulating lamellar actomyosin retrograde flow that is crucial to cell protrusion and migration. May be involved in the maintenance of the stromal cell architectures required for cell to cell contact. Regulates trafficking, expression, and activation of innate immune receptors on macrophages. Plays a role to suppress inflammatory responsiveness of macrophages via a mechanism that modulates CD14 trafficking. Acts as a receptor of surfactant-associated protein A (SFTPA1/SP-A) and plays an important role in internalization and clearance of SFTPA1-opsonized S.aureus by alveolar macrophages. Strongly enhances natural killer cell cytotoxicity. The polypeptide is Unconventional myosin-XVIIIa (Myo18a) (Mus musculus (Mouse)).